Reading from the N-terminus, the 762-residue chain is uncharacterized protein (762 aa).

One can recognise an MCM domain in the interval 334–542 (IIDILSNYLI…SDEEIAEHIL (209 aa)). An ATP-binding site is contributed by 384 to 391 (TDPGIGKS).

The protein belongs to the MCM family.

This is an uncharacterized protein from Methanocaldococcus jannaschii (strain ATCC 43067 / DSM 2661 / JAL-1 / JCM 10045 / NBRC 100440) (Methanococcus jannaschii).